An 835-amino-acid polypeptide reads, in one-letter code: MAAEEALKTVDQYKTEIERLTKELTETTHEKIQAAEYGLVVLEEKLTLKQQYDELEAEYDGLKQELEQLREAFGQSFSIHRKVAEDGETREETLLQESASKEAYYLNKILEMQNELKQSRAVVTNVQAENERLSAVVQELKENNEMVELQRIRMKDEIREYKFREARLLQDYTELEEENITLQKLVSTLKQNQVEYEGLKHEIKRFEEETVLLNSQLEDAIRLKEIAEHQLEEALETLKNEREQKNNLRKELSQYINLSDSHISISVDGLKFAEDGSEPNNDDKMNGHIHGPLGKLNGDYRTPTTRKGESLHPVSDLFSELNISEIQKLKQQLIQVEREKAILLANLQESQTQLEHTKGALTEQHERVHRLTEHVNAMRGLQNSKEIKAELDCEKGRNSAEEAHDYEVDINGLEILECKYRVAVTEVIDLKAEIKALKEKYNKSVENYTEEKTKYESKIQMYDEQVTNLEKTSKESGEKMAHMEKELQKMTGIANENHNTLNTAQDELVTFSEELAQLYHHVCLCNNETPNRVMLDYYRQSRVTRSGSLKGPDDPRGLLSPRLSRRGVSSPVESRTSSEPVSKENTETSKEPSPTKTPTISPVITAPPSSPVLDTSDIRKEPMNIYNLNAIIRDQIKHLQKAVDRSLQLSRQRAAARELAPMIDKDKEALMEEILKLKSLLSTKREQIATLRAVLKANKQTAEVALANLKNKYENEKAMVTETMTKLRNELKALKEDAATFSSLRAMFATRCDEYVTQLDEMQRQLAAAEDEKKTLNTLLRMAIQQKLALTQRLEDLEFDHEQSRRSKGKLGKSKIGSPKIVSSLLPPYRHSAHN.

Positions 1–264 (MAAEEALKTV…YINLSDSHIS (264 aa)) form a coiled coil. Positions 278 to 297 (EPNNDDKMNGHIHGPLGKLN) are disordered. Positions 320 to 519 (ELNISEIQKL…TFSEELAQLY (200 aa)) form a coiled coil. 2 disordered regions span residues 545 to 616 (RSGS…LDTS) and 800 to 835 (DHEQ…SAHN). Positions 557–572 (GLLSPRLSRRGVSSPV) are enriched in low complexity. Residues 581-590 (VSKENTETSK) show a composition bias toward basic and acidic residues. Low complexity predominate over residues 591–604 (EPSPTKTPTISPVI). Residues 663–803 (IDKDKEALME…LEDLEFDHEQ (141 aa)) are a coiled coil. The interaction with RAB6A stretch occupies residues 663–803 (IDKDKEALME…LEDLEFDHEQ (141 aa)).

The protein belongs to the BicD family. In terms of assembly, interacts with RAB6A. Interacts (via C-terminus) with RAB6B (GTP-bound); the interaction is direct. Interacts with CLIP-115 and KIFC2. As to expression, expressed in the brain, heart and skeletal muscle.

Its subcellular location is the golgi apparatus. Its function is as follows. Regulates coat complex coatomer protein I (COPI)-independent Golgi-endoplasmic reticulum transport by recruiting the dynein-dynactin motor complex. This Mus musculus (Mouse) protein is Protein bicaudal D homolog 1 (Bicd1).